The sequence spans 123 residues: MPDASPSCAGQAAEDHALEHLRGQGLRLLARNWRCKGGELDLVMLDADTVVFVEVRYRLHAGFGGALGSIDGRKQKRLTLAANLFLQSEPRWADKPCRFDVVALQGQGHAGQPLQWLKNAFEC.

Belongs to the UPF0102 family.

This Pseudomonas entomophila (strain L48) protein is UPF0102 protein PSEEN4497.